The following is a 644-amino-acid chain: Chaperone protein HscA (644 aa).

This sequence belongs to the heat shock protein 70 family.

Functionally, chaperone involved in the maturation of iron-sulfur cluster-containing proteins. Has a low intrinsic ATPase activity which is markedly stimulated by HscB. Involved in the maturation of IscU. In Yersinia pseudotuberculosis serotype I (strain IP32953), this protein is Chaperone protein HscA.